Here is a 282-residue protein sequence, read N- to C-terminus: Malonyl-[acyl-carrier protein] O-methyltransferase 1 (282 aa).

It belongs to the methyltransferase superfamily.

It catalyses the reaction malonyl-[ACP] + S-adenosyl-L-methionine = malonyl-[ACP] methyl ester + S-adenosyl-L-homocysteine. Its pathway is cofactor biosynthesis; biotin biosynthesis. Converts the free carboxyl group of a malonyl-thioester to its methyl ester by transfer of a methyl group from S-adenosyl-L-methionine (SAM). It allows to synthesize pimeloyl-ACP via the fatty acid synthetic pathway. This is Malonyl-[acyl-carrier protein] O-methyltransferase 1 from Coxiella burnetii (strain RSA 493 / Nine Mile phase I).